Reading from the N-terminus, the 83-residue chain is MAGERAQNLQDTFLNHVRKNKIPLTIFLVNGVKLQGVVTWFDNFCVLLRRDGHSQLVYKHAISTIMPGHPVQLFEPDETAEKA.

The Sm domain occupies 11 to 71 (DTFLNHVRKN…ISTIMPGHPV (61 aa)).

The protein belongs to the Hfq family. In terms of assembly, homohexamer.

Its function is as follows. RNA chaperone that binds small regulatory RNA (sRNAs) and mRNAs to facilitate mRNA translational regulation in response to envelope stress, environmental stress and changes in metabolite concentrations. Also binds with high specificity to tRNAs. The protein is RNA-binding protein Hfq of Methylobacterium radiotolerans (strain ATCC 27329 / DSM 1819 / JCM 2831 / NBRC 15690 / NCIMB 10815 / 0-1).